A 231-amino-acid polypeptide reads, in one-letter code: Large ribosomal subunit protein uL1 (231 aa).

The protein belongs to the universal ribosomal protein uL1 family. As to quaternary structure, part of the 50S ribosomal subunit.

Its function is as follows. Binds directly to 23S rRNA. The L1 stalk is quite mobile in the ribosome, and is involved in E site tRNA release. Protein L1 is also a translational repressor protein, it controls the translation of the L11 operon by binding to its mRNA. In Polaromonas sp. (strain JS666 / ATCC BAA-500), this protein is Large ribosomal subunit protein uL1.